The primary structure comprises 186 residues: Methylamine dehydrogenase light chain (186 aa).

The segment at residues methionine 1 to alanine 57 is a signal peptide (tat-type signal). 6 cysteine pairs are disulfide-bonded: cysteine 78–cysteine 143, cysteine 84–cysteine 116, cysteine 91–cysteine 176, cysteine 93–cysteine 141, cysteine 101–cysteine 132, and cysteine 133–cysteine 164. The residue at position 112 (tryptophan 112) is a Tryptophylquinone. The segment at residues tryptophan 112 to tryptophan 163 is a cross-link (tryptophan tryptophylquinone (Trp-Trp)).

Belongs to the aromatic amine dehydrogenase light chain family. As to quaternary structure, heterotetramer of two light and two heavy chains. Requires tryptophan tryptophylquinone residue as cofactor. Predicted to be exported by the Tat system. The position of the signal peptide cleavage has not been experimentally proven. Post-translationally, tryptophan tryptophylquinone (TTQ) is formed by oxidation of the indole ring of a tryptophan to form tryptophylquinone followed by covalent cross-linking with another tryptophan residue.

It localises to the periplasm. It catalyses the reaction 2 oxidized [amicyanin] + methylamine + H2O = 2 reduced [amicyanin] + formaldehyde + NH4(+) + 2 H(+). It functions in the pathway one-carbon metabolism; methylamine degradation; formaldehyde from methylamine: step 1/1. In terms of biological role, methylamine dehydrogenase carries out the oxidation of methylamine. Electrons are passed from methylamine dehydrogenase to amicyanin. The sequence is that of Methylamine dehydrogenase light chain (mauA) from Methylobacillus flagellatus (strain ATCC 51484 / DSM 6875 / VKM B-1610 / KT).